Reading from the N-terminus, the 566-residue chain is Mitochondrial distribution and morphology protein 34 (566 aa).

In terms of domain architecture, SMP-LTD spans 1–195; that stretch reads MAFNFNWSPL…LPAIIHRLSL (195 aa). Disordered regions lie at residues 212–237, 349–401, 432–518, and 539–566; these read PEQT…DSLG, GYGL…NPSV, PERR…SSST, and KLMP…AYGQ. A compositionally biased stretch (basic residues) spans 358–370; the sequence is RHSKAHSRKRKKR. Residues 380 to 401 are compositionally biased toward polar residues; it reads TSDTASVSDESAYTETASNPSV. Residues 444-454 show a composition bias toward basic and acidic residues; that stretch reads PRRDIATEMLR.

It belongs to the MDM34 family. Component of the ER-mitochondria encounter structure (ERMES) or MDM complex, composed of mmm1, mdm10, mdm12 and mdm34.

It localises to the mitochondrion outer membrane. Its function is as follows. Component of the ERMES/MDM complex, which serves as a molecular tether to connect the endoplasmic reticulum (ER) and mitochondria. Components of this complex are involved in the control of mitochondrial shape and protein biogenesis, and function in nonvesicular lipid trafficking between the ER and mitochondria. Mdm34 is required for the interaction of the ER-resident membrane protein mmm1 and the outer mitochondrial membrane-resident beta-barrel protein mdm10. This is Mitochondrial distribution and morphology protein 34 from Aspergillus flavus (strain ATCC 200026 / FGSC A1120 / IAM 13836 / NRRL 3357 / JCM 12722 / SRRC 167).